We begin with the raw amino-acid sequence, 1284 residues long: ABC multidrug transporter atrC (1284 aa).

Over residues 1–11 (MKSTAESKETP) the composition is skewed to basic and acidic residues. The tract at residues 1-24 (MKSTAESKETPSQDESTTSVPCTE) is disordered. The next 6 helical transmembrane spans lie at 55 to 75 (AVAI…NLIF), 99 to 119 (AAEL…LSYT), 178 to 198 (IGLL…AFVV), 203 to 223 (TLIC…VAAV), 282 to 302 (LLGL…GLAF), and 320 to 340 (IFTV…LAPY). The ABC transmembrane type-1 1 domain maps to 55 to 346 (AVAILAACAS…LAPYSIEFSR (292 aa)). Positions 381–626 (VELENVTFSY…DGVYAGLVKI (246 aa)) constitute an ABC transporter 1 domain. 2 N-linked (GlcNAc...) asparagine glycosylation sites follow: N385 and N401. 416 to 423 (GQSGSGKS) provides a ligand contact to ATP. N-linked (GlcNAc...) asparagine glycosylation is found at N488 and N632. The next 2 helical transmembrane spans lie at 705-725 (LVVL…AILM) and 745-765 (FYAS…LAVG). The ABC transmembrane type-1 2 domain occupies 705–992 (LVVLLGCLGG…LFQWSTSITK (288 aa)). N-linked (GlcNAc...) asparagine glycosylation is present at N800. 4 helical membrane-spanning segments follow: residues 824 to 844 (IALV…AIAF), 846 to 866 (WKLG…AGMV), 931 to 951 (MICF…GFWY), and 955 to 975 (LVSL…SVFF). Residue N995 is glycosylated (N-linked (GlcNAc...) asparagine). One can recognise an ABC transporter 2 domain in the interval 1027–1280 (IAMDNVRFSY…GGLYRRMCEA (254 aa)). 1062 to 1069 (GSSGCGKS) contacts ATP. N-linked (GlcNAc...) asparagine glycosylation is present at N1122.

Belongs to the ABC transporter superfamily. ABCB family. Multidrug resistance exporter (TC 3.A.1.201) subfamily.

Its subcellular location is the cell membrane. Pleiotropic ABC efflux transporter involved in the protection of the cells against a wide range of toxic compounds. This is ABC multidrug transporter atrC from Emericella nidulans (strain FGSC A4 / ATCC 38163 / CBS 112.46 / NRRL 194 / M139) (Aspergillus nidulans).